We begin with the raw amino-acid sequence, 706 residues long: Fatty acid oxidation complex subunit alpha (706 aa).

The tract at residues 1-188 (MDKSFTLNRL…KMGLVDDVVP (188 aa)) is enoyl-CoA hydratase. The segment at 308–706 (KAVNKVMVLG…MAESGSKFYE (399 aa)) is 3-hydroxyacyl-CoA dehydrogenase.

This sequence in the N-terminal section; belongs to the enoyl-CoA hydratase/isomerase family. In the central section; belongs to the 3-hydroxyacyl-CoA dehydrogenase family. Heterotetramer of two alpha chains (FadJ) and two beta chains (FadI).

The protein localises to the cytoplasm. It catalyses the reaction a (3S)-3-hydroxyacyl-CoA = a (2E)-enoyl-CoA + H2O. The catalysed reaction is a 4-saturated-(3S)-3-hydroxyacyl-CoA = a (3E)-enoyl-CoA + H2O. The enzyme catalyses a (3S)-3-hydroxyacyl-CoA + NAD(+) = a 3-oxoacyl-CoA + NADH + H(+). It carries out the reaction (3S)-3-hydroxybutanoyl-CoA = (3R)-3-hydroxybutanoyl-CoA. It functions in the pathway lipid metabolism; fatty acid beta-oxidation. In terms of biological role, catalyzes the formation of a hydroxyacyl-CoA by addition of water on enoyl-CoA. Also exhibits 3-hydroxyacyl-CoA epimerase and 3-hydroxyacyl-CoA dehydrogenase activities. The polypeptide is Fatty acid oxidation complex subunit alpha (Shewanella loihica (strain ATCC BAA-1088 / PV-4)).